The primary structure comprises 190 residues: Vacuolar protein sorting-associated protein 29 (190 aa).

Belongs to the VPS29 family. As to quaternary structure, component of the retromer complex which consists of VPS29 (MAG1), VPS26 (VPS26A or VPS26B), VPS35 (VPS35A or VPS35B or VPS35C), VPS5/17 (SNX1 or SNX2A or SNX2B). Component of a retromer subcomplex consisting of VPS29 (MAG1), VPS26 (VPS26A or VPS26B), VPS35 (VPS35A or VPS35B or VPS35C).

The protein localises to the cytoplasm. It localises to the endosome membrane. The protein resides in the prevacuolar compartment membrane. It is found in the golgi apparatus. Its subcellular location is the trans-Golgi network membrane. The protein localises to the late endosome membrane. Its function is as follows. Plays a role in vesicular protein sorting. Component of the membrane-associated retromer complex which is essential in endosome-to-Golgi retrograde transport. Required for the auxin-carrier protein PIN2 sorting to the lytic vacuolar pathway and the PIN1 recycling to the plasma membrane, thus influencing auxin transport orientation. Also involved in the efficient sorting of seed storage proteins globulin 12S and albumin 2S. The VPS29-VPS26-VPS35 subcomplex may be involved in recycling of specific cargos from endosome to the plasma membrane. In Arabidopsis thaliana (Mouse-ear cress), this protein is Vacuolar protein sorting-associated protein 29.